A 391-amino-acid polypeptide reads, in one-letter code: Heme A synthase (391 aa).

A run of 8 helical transmembrane segments spans residues 37-57 (IRLWLMALFLLVMAMIVVGGL), 121-141 (RQLGRVIGLVWAVGFLGFLAA), 152-172 (LLALGALGGLQGGIGWWMVAS), 186-206 (LATHLGLAFIILGLIAWQALL), 229-249 (TTVLIGVAFLQIVLGALVAGI), 298-318 (FLHRMAGYALAALGLIFWIFG), 332-352 (LLAMALLAQILLGVGTVLSAA), and 354-374 (WQVAIAHQVGAVVIWVLILHA). Histidine 300 lines the heme pocket. Histidine 360 contributes to the heme binding site.

It belongs to the COX15/CtaA family. Type 2 subfamily. In terms of assembly, interacts with CtaB. The cofactor is heme b.

Its subcellular location is the cell membrane. It carries out the reaction Fe(II)-heme o + 2 A + H2O = Fe(II)-heme a + 2 AH2. The protein operates within porphyrin-containing compound metabolism; heme A biosynthesis; heme A from heme O: step 1/1. Its function is as follows. Catalyzes the conversion of heme O to heme A by two successive hydroxylations of the methyl group at C8. The first hydroxylation forms heme I, the second hydroxylation results in an unstable dihydroxymethyl group, which spontaneously dehydrates, resulting in the formyl group of heme A. The protein is Heme A synthase of Cereibacter sphaeroides (strain KD131 / KCTC 12085) (Rhodobacter sphaeroides).